Consider the following 46-residue polypeptide: Diuretic hormone (46 aa).

Ile46 carries the isoleucine amide modification.

It belongs to the sauvagine/corticotropin-releasing factor/urotensin I family.

It is found in the secreted. Regulation of fluid secretion. Stimulates primary urine secretion by Malpighian tubules and causes a dose-dependent stimulation of cAMP levels in the tubules. This Acheta domesticus (House cricket) protein is Diuretic hormone.